A 633-amino-acid polypeptide reads, in one-letter code: 1-deoxy-D-xylulose-5-phosphate synthase (633 aa).

Residues H72 and 113 to 115 (GHS) contribute to the thiamine diphosphate site. Position 144 (D144) interacts with Mg(2+). Residues 145–146 (GA), N173, Y284, and E367 contribute to the thiamine diphosphate site. N173 contacts Mg(2+).

This sequence belongs to the transketolase family. DXPS subfamily. In terms of assembly, homodimer. It depends on Mg(2+) as a cofactor. Requires thiamine diphosphate as cofactor.

The catalysed reaction is D-glyceraldehyde 3-phosphate + pyruvate + H(+) = 1-deoxy-D-xylulose 5-phosphate + CO2. Its pathway is metabolic intermediate biosynthesis; 1-deoxy-D-xylulose 5-phosphate biosynthesis; 1-deoxy-D-xylulose 5-phosphate from D-glyceraldehyde 3-phosphate and pyruvate: step 1/1. In terms of biological role, catalyzes the acyloin condensation reaction between C atoms 2 and 3 of pyruvate and glyceraldehyde 3-phosphate to yield 1-deoxy-D-xylulose-5-phosphate (DXP). The chain is 1-deoxy-D-xylulose-5-phosphate synthase from Bacillus licheniformis (strain ATCC 14580 / DSM 13 / JCM 2505 / CCUG 7422 / NBRC 12200 / NCIMB 9375 / NCTC 10341 / NRRL NRS-1264 / Gibson 46).